A 552-amino-acid chain; its full sequence is Cholesterol oxidase (552 aa).

Residues 1 to 45 (MTDSRANRADATRGVASVSRRRFLAGAGLTAGAIALSSMSTSASA) constitute a signal peptide (tat-type signal). Residues Tyr-66, Gly-67, Glu-86, Gly-160, Asn-164, Gly-165, Met-167, and Val-295 each coordinate FAD. Active-site proton acceptor residues include Glu-406 and His-492. The FAD site is built by Gly-520 and Phe-532.

The protein belongs to the GMC oxidoreductase family. FAD serves as cofactor. In terms of processing, predicted to be exported by the Tat system. The position of the signal peptide cleavage has been experimentally proven.

Its subcellular location is the secreted. The enzyme catalyses cholesterol + O2 = cholest-5-en-3-one + H2O2. It carries out the reaction cholest-5-en-3-one = cholest-4-en-3-one. It functions in the pathway steroid metabolism; cholesterol degradation. Its function is as follows. Bifunctional enzyme that catalyzes the oxidation and isomerization of cholesterol to cholestenone (cholest-4-en-3-one), an initial step in the cholesterol degradation process. This Brevibacterium sterolicum protein is Cholesterol oxidase.